A 220-amino-acid polypeptide reads, in one-letter code: uncharacterized protein (220 aa).

This is an uncharacterized protein from Bacillus subtilis (strain 168).